The following is a 217-amino-acid chain: UPF0193 protein EVG1 (217 aa).

Belongs to the UPF0193 (EVG1) family.

This is UPF0193 protein EVG1 (C22orf23) from Homo sapiens (Human).